We begin with the raw amino-acid sequence, 205 residues long: Guanylate kinase (205 aa).

Residues 6 to 184 (GLLLVVSGPS…SAKEIEGIIS (179 aa)) form the Guanylate kinase-like domain. Residue 13–20 (GPSGAGKG) coordinates ATP.

The protein belongs to the guanylate kinase family.

Its subcellular location is the cytoplasm. The enzyme catalyses GMP + ATP = GDP + ADP. Essential for recycling GMP and indirectly, cGMP. The chain is Guanylate kinase from Clostridioides difficile (strain 630) (Peptoclostridium difficile).